Consider the following 416-residue polypeptide: Serine hydroxymethyltransferase (416 aa).

Residues leucine 119 and 123-125 (GHL) each bind (6S)-5,6,7,8-tetrahydrofolate. Lysine 228 is modified (N6-(pyridoxal phosphate)lysine).

Belongs to the SHMT family. Homodimer. Pyridoxal 5'-phosphate is required as a cofactor.

Its subcellular location is the cytoplasm. The catalysed reaction is (6R)-5,10-methylene-5,6,7,8-tetrahydrofolate + glycine + H2O = (6S)-5,6,7,8-tetrahydrofolate + L-serine. Its pathway is one-carbon metabolism; tetrahydrofolate interconversion. The protein operates within amino-acid biosynthesis; glycine biosynthesis; glycine from L-serine: step 1/1. In terms of biological role, catalyzes the reversible interconversion of serine and glycine with tetrahydrofolate (THF) serving as the one-carbon carrier. This reaction serves as the major source of one-carbon groups required for the biosynthesis of purines, thymidylate, methionine, and other important biomolecules. Also exhibits THF-independent aldolase activity toward beta-hydroxyamino acids, producing glycine and aldehydes, via a retro-aldol mechanism. The protein is Serine hydroxymethyltransferase of Moorella thermoacetica (strain ATCC 39073 / JCM 9320).